The primary structure comprises 220 residues: Sericin-2 (220 aa).

2 stretches are compositionally biased toward low complexity: residues Ser1–Ser131 and Asn141–Ala155. The tract at residues Ser1–Ala220 is disordered. The segment covering Thr156 to Gly165 has biased composition (polar residues). Residues Ser166–Ala220 are compositionally biased toward low complexity.

Produced exclusively in the middle (MSG) section of silk glands.

It is found in the secreted. In terms of biological role, provides the silk fibroin thread with a sticky coating. Acts as a cement by sticking silk threads together. This Galleria mellonella (Greater wax moth) protein is Sericin-2 (SER2).